The following is a 427-amino-acid chain: 3-phosphoshikimate 1-carboxyvinyltransferase (427 aa).

Positions 22, 23, and 27 each coordinate 3-phosphoshikimate. Lys-22 lines the phosphoenolpyruvate pocket. Positions 97 and 125 each coordinate phosphoenolpyruvate. 3-phosphoshikimate is bound by residues Ser-171, Ser-172, Gln-173, Ser-199, Asp-315, Asn-338, and Lys-342. Residue Gln-173 participates in phosphoenolpyruvate binding. Asp-315 acts as the Proton acceptor in catalysis. Positions 346, 388, and 413 each coordinate phosphoenolpyruvate.

It belongs to the EPSP synthase family. In terms of assembly, monomer.

The protein resides in the cytoplasm. It carries out the reaction 3-phosphoshikimate + phosphoenolpyruvate = 5-O-(1-carboxyvinyl)-3-phosphoshikimate + phosphate. It participates in metabolic intermediate biosynthesis; chorismate biosynthesis; chorismate from D-erythrose 4-phosphate and phosphoenolpyruvate: step 6/7. Functionally, catalyzes the transfer of the enolpyruvyl moiety of phosphoenolpyruvate (PEP) to the 5-hydroxyl of shikimate-3-phosphate (S3P) to produce enolpyruvyl shikimate-3-phosphate and inorganic phosphate. This Aliivibrio salmonicida (strain LFI1238) (Vibrio salmonicida (strain LFI1238)) protein is 3-phosphoshikimate 1-carboxyvinyltransferase.